Consider the following 298-residue polypeptide: GTPase Era (298 aa).

The region spanning 8 to 176 (RCGRIAVIGR…VSDLLALLPE (169 aa)) is the Era-type G domain. A G1 region spans residues 16 to 23 (GRPNVGKS). GTP is bound at residue 16 to 23 (GRPNVGKS). The tract at residues 42 to 46 (QTTRH) is G2. Residues 63-66 (DTPG) are G3. Residues 63–67 (DTPGL) and 125–128 (NKID) contribute to the GTP site. Residues 125–128 (NKID) are G4. The tract at residues 155 to 157 (VSA) is G5. In terms of domain architecture, KH type-2 spans 199-283 (VREQVMRQLG…FLETWVRVRK (85 aa)).

Belongs to the TRAFAC class TrmE-Era-EngA-EngB-Septin-like GTPase superfamily. Era GTPase family. Monomer.

It is found in the cytoplasm. The protein resides in the cell inner membrane. An essential GTPase that binds both GDP and GTP, with rapid nucleotide exchange. Plays a role in 16S rRNA processing and 30S ribosomal subunit biogenesis and possibly also in cell cycle regulation and energy metabolism. The polypeptide is GTPase Era (Xylella fastidiosa (strain M12)).